The chain runs to 113 residues: UPF0102 protein CHU_0465 (113 aa).

The protein belongs to the UPF0102 family.

The polypeptide is UPF0102 protein CHU_0465 (Cytophaga hutchinsonii (strain ATCC 33406 / DSM 1761 / CIP 103989 / NBRC 15051 / NCIMB 9469 / D465)).